We begin with the raw amino-acid sequence, 328 residues long: Beta-ketoacyl-[acyl-carrier-protein] synthase III (328 aa).

Catalysis depends on residues Cys-114 and His-253. Residues 254–258 (QANIR) form an ACP-binding region. Residue Asn-283 is part of the active site.

The protein belongs to the thiolase-like superfamily. FabH family. Homodimer.

The protein resides in the cytoplasm. It catalyses the reaction malonyl-[ACP] + acetyl-CoA + H(+) = 3-oxobutanoyl-[ACP] + CO2 + CoA. Its pathway is lipid metabolism; fatty acid biosynthesis. In terms of biological role, catalyzes the condensation reaction of fatty acid synthesis by the addition to an acyl acceptor of two carbons from malonyl-ACP. Catalyzes the first condensation reaction which initiates fatty acid synthesis and may therefore play a role in governing the total rate of fatty acid production. Possesses both acetoacetyl-ACP synthase and acetyl transacylase activities. Its substrate specificity determines the biosynthesis of branched-chain and/or straight-chain of fatty acids. The sequence is that of Beta-ketoacyl-[acyl-carrier-protein] synthase III from Clostridioides difficile (strain 630) (Peptoclostridium difficile).